We begin with the raw amino-acid sequence, 243 residues long: Anti-sigma-K factor RskA (243 aa).

The Cytoplasmic portion of the chain corresponds to 1-102 (MTEPNNTDLL…RGGESRWRTA (102 aa)). Residues 103-123 (VLAAAAVAVVGLGALGVGLAL) form a helical membrane-spanning segment. Residues 124 to 243 (RPAVSPTTAD…SPAFAELPLT (120 aa)) lie on the Extracellular side of the membrane. Residues 223 to 243 (VEPPGGSQRPTSPAFAELPLT) form a disordered region.

The protein belongs to the anti-sigma-K factor family.

The protein localises to the cell membrane. An anti-sigma factor for extracytoplasmic function (ECF) sigma factor SigK. ECF sigma factors are held in an inactive form by an anti-sigma factor until released by regulated intramembrane proteolysis (RIP). RIP occurs when an extracytoplasmic signal triggers a concerted proteolytic cascade to transmit information and elicit cellular responses. The membrane-spanning regulatory substrate protein is first cut extracytoplasmically (site-1 protease, S1P), then within the membrane itself (site-2 protease, S2P, Rip1), while cytoplasmic proteases finish degrading the regulatory protein, liberating the sigma factor. This chain is Anti-sigma-K factor RskA (rskA), found in Mycobacterium sp. (strain JLS).